A 94-amino-acid polypeptide reads, in one-letter code: Large ribosomal subunit protein bL27 (94 aa).

The propeptide occupies 1–9; it reads MLRLDLQFF.

The protein belongs to the bacterial ribosomal protein bL27 family. In terms of processing, the N-terminus is cleaved by ribosomal processing cysteine protease Prp.

This Bacillus velezensis (strain DSM 23117 / BGSC 10A6 / LMG 26770 / FZB42) (Bacillus amyloliquefaciens subsp. plantarum) protein is Large ribosomal subunit protein bL27.